The primary structure comprises 362 residues: Histidinol-phosphate aminotransferase (362 aa).

Position 218 is an N6-(pyridoxal phosphate)lysine (K218).

It belongs to the class-II pyridoxal-phosphate-dependent aminotransferase family. Histidinol-phosphate aminotransferase subfamily. As to quaternary structure, homodimer. Requires pyridoxal 5'-phosphate as cofactor.

It carries out the reaction L-histidinol phosphate + 2-oxoglutarate = 3-(imidazol-4-yl)-2-oxopropyl phosphate + L-glutamate. Its pathway is amino-acid biosynthesis; L-histidine biosynthesis; L-histidine from 5-phospho-alpha-D-ribose 1-diphosphate: step 7/9. The polypeptide is Histidinol-phosphate aminotransferase (Xanthomonas campestris pv. campestris (strain B100)).